The primary structure comprises 166 residues: Endoribonuclease YbeY (166 aa).

Zn(2+) is bound by residues histidine 132, histidine 136, and histidine 142.

It belongs to the endoribonuclease YbeY family. It depends on Zn(2+) as a cofactor.

The protein resides in the cytoplasm. Functionally, single strand-specific metallo-endoribonuclease involved in late-stage 70S ribosome quality control and in maturation of the 3' terminus of the 16S rRNA. The polypeptide is Endoribonuclease YbeY (Clostridium acetobutylicum (strain ATCC 824 / DSM 792 / JCM 1419 / IAM 19013 / LMG 5710 / NBRC 13948 / NRRL B-527 / VKM B-1787 / 2291 / W)).